The following is a 198-amino-acid chain: Recombination protein RecR (198 aa).

A C4-type zinc finger spans residues 57-72; it reads CSICGNLTDEDPCAIC. Positions 80-175 constitute a Toprim domain; sequence STILIVEDSR…KVTRLARGLA (96 aa).

This sequence belongs to the RecR family.

May play a role in DNA repair. It seems to be involved in an RecBC-independent recombinational process of DNA repair. It may act with RecF and RecO. The chain is Recombination protein RecR from Streptococcus gordonii (strain Challis / ATCC 35105 / BCRC 15272 / CH1 / DL1 / V288).